Reading from the N-terminus, the 89-residue chain is Barrier-to-autointegration factor 1 (89 aa).

The protein belongs to the BAF family. In terms of assembly, interacts with emr-1 and lem-2. Interacts with lem-4l, leading to decreased phosphorylation by VRK1 and promoting dephosphorylation by protein phosphatase 2A (PP2A). Post-translationally, phosphorylated by vrk-1. Phosphorylation by vrk-1 in mitosis is essential to achieve correct timing of recruitment of nuclear envelope components during nuclear envelope assembly. Dephosphorylated by protein phosphatase 2A (PP2A) following interaction with lem-4l during mitotic exit, leading to mitotic nuclear envelope reassembly.

The protein localises to the nucleus. Its function is as follows. DNA-binding protein which plays an essential role in nuclear envelope formation. Required for normal chromosome segregation during mitosis. Associates with the nuclear lamina via its interaction with LEM domain containing proteins emr-1 and lem-2. In association with lem-3, plays a role in radiation-induced DNA damage repair response. This Caenorhabditis elegans protein is Barrier-to-autointegration factor 1 (baf-1).